Here is a 145-residue protein sequence, read N- to C-terminus: 5-hydroxymethyl-dUMP N-hydrolase (145 aa).

Positions 7, 9, 10, 11, 79, 81, 85, and 109 each coordinate 5-hydroxymethyl-dUMP.

The protein belongs to the 2'-deoxynucleoside 5'-phosphate N-hydrolase 1 family. As to quaternary structure, monomer and homodimer.

The protein localises to the cytoplasm. Its subcellular location is the nucleus. It carries out the reaction 5-hydroxymethyl-dUMP + H2O = 5-hydroxymethyluracil + 2-deoxy-D-ribose 5-phosphate. Part of a nucleotide salvage pathway that eliminates epigenetically modified 5-hydroxymethyl-dCMP (hmdCMP) in a two-step process entailing deamination to cytotoxic 5-hydroxymethyl-dUMP (hmdUMP), followed by its hydrolysis into 5-hydroxymethyluracil (hmU) and 2-deoxy-D-ribose 5-phosphate (deoxyribosephosphate). Catalyzes the second step in that pathway, the hydrolysis of the N-glycosidic bond in hmdUMP, degrading this cytotoxic nucleotide to avoid its genomic integration. In Esox lucius (Northern pike), this protein is 5-hydroxymethyl-dUMP N-hydrolase.